The following is a 155-amino-acid chain: 6,7-dimethyl-8-ribityllumazine synthase (155 aa).

Residues F24, 58 to 60 (AFE), and 82 to 84 (VII) each bind 5-amino-6-(D-ribitylamino)uracil. Position 87–88 (87–88 (ST)) interacts with (2S)-2-hydroxy-3-oxobutyl phosphate. The Proton donor role is filled by H90. F115 serves as a coordination point for 5-amino-6-(D-ribitylamino)uracil. Residue R129 coordinates (2S)-2-hydroxy-3-oxobutyl phosphate.

The protein belongs to the DMRL synthase family.

The enzyme catalyses (2S)-2-hydroxy-3-oxobutyl phosphate + 5-amino-6-(D-ribitylamino)uracil = 6,7-dimethyl-8-(1-D-ribityl)lumazine + phosphate + 2 H2O + H(+). Its pathway is cofactor biosynthesis; riboflavin biosynthesis; riboflavin from 2-hydroxy-3-oxobutyl phosphate and 5-amino-6-(D-ribitylamino)uracil: step 1/2. Catalyzes the formation of 6,7-dimethyl-8-ribityllumazine by condensation of 5-amino-6-(D-ribitylamino)uracil with 3,4-dihydroxy-2-butanone 4-phosphate. This is the penultimate step in the biosynthesis of riboflavin. This chain is 6,7-dimethyl-8-ribityllumazine synthase, found in Chlorobium chlorochromatii (strain CaD3).